The sequence spans 94 residues: MEKVRLTAFVHGHVQGVGFRWWTTSQAQELKLAGSASNLSDGRVCVVAEGPQTQCEELLRRLKENPSSYRRPGHVDTVIEQWGEPRDVEGFVER.

An Acylphosphatase-like domain is found at 5 to 94; sequence RLTAFVHGHV…PRDVEGFVER (90 aa). Catalysis depends on residues R20 and N38.

It belongs to the acylphosphatase family.

It catalyses the reaction an acyl phosphate + H2O = a carboxylate + phosphate + H(+). In Corynebacterium glutamicum (strain R), this protein is Acylphosphatase (acyP).